The sequence spans 987 residues: Mediator of RNA polymerase II transcription subunit 24 (987 aa).

6 short sequence motifs (LXXLL motif) span residues 128–132 (LHWLL), 344–348 (LTPLL), 446–450 (LDLLL), 555–559 (LVALL), 786–790 (LPGLL), and 855–859 (LMRLL). A phosphoserine mark is found at serine 860 and serine 871.

The protein belongs to the Mediator complex subunit 24 family. Component of the Mediator complex, which is composed of MED1, MED4, MED6, MED7, MED8, MED9, MED10, MED11, MED12, MED13, MED13L, MED14, MED15, MED16, MED17, MED18, MED19, MED20, MED21, MED22, MED23, MED24, MED25, MED26, MED27, MED29, MED30, MED31, CCNC, CDK8 and CDC2L6/CDK11. The MED12, MED13, CCNC and CDK8 subunits form a distinct module termed the CDK8 module. Mediator containing the CDK8 module is less active than Mediator lacking this module in supporting transcriptional activation. Individual preparations of the Mediator complex lacking one or more distinct subunits have been variously termed ARC, CRSP, DRIP, PC2, SMCC and TRAP. Interacts with AR.

The protein localises to the nucleus. In terms of biological role, component of the Mediator complex, a coactivator involved in the regulated transcription of nearly all RNA polymerase II-dependent genes. Mediator functions as a bridge to convey information from gene-specific regulatory proteins to the basal RNA polymerase II transcription machinery. Mediator is recruited to promoters by direct interactions with regulatory proteins and serves as a scaffold for the assembly of a functional preinitiation complex with RNA polymerase II and the general transcription factors. The chain is Mediator of RNA polymerase II transcription subunit 24 (Med24) from Rattus norvegicus (Rat).